Reading from the N-terminus, the 151-residue chain is Putative phosphatidylglycerol/phosphatidylinositol transfer protein 3 (151 aa).

The first 26 residues, 1–26 (MKYSQNQIVYVIFFFIILIVVKPIES), serve as a signal peptide directing secretion.

This sequence belongs to the NPC2 family. As to quaternary structure, monomer.

Catalyzes the intermembrane transfer of phosphatidylglycerol and phosphatidylinositol. This Dictyostelium discoideum (Social amoeba) protein is Putative phosphatidylglycerol/phosphatidylinositol transfer protein 3.